The chain runs to 426 residues: Histidine--tRNA ligase (426 aa).

The protein belongs to the class-II aminoacyl-tRNA synthetase family.

Its subcellular location is the cytoplasm. The enzyme catalyses tRNA(His) + L-histidine + ATP = L-histidyl-tRNA(His) + AMP + diphosphate + H(+). The sequence is that of Histidine--tRNA ligase from Saccharolobus islandicus (strain L.S.2.15 / Lassen #1) (Sulfolobus islandicus).